A 182-amino-acid chain; its full sequence is Ribosome-recycling factor (182 aa).

The protein belongs to the RRF family.

The protein localises to the cytoplasm. Its function is as follows. Responsible for the release of ribosomes from messenger RNA at the termination of protein biosynthesis. May increase the efficiency of translation by recycling ribosomes from one round of translation to another. This chain is Ribosome-recycling factor, found in Thermosynechococcus vestitus (strain NIES-2133 / IAM M-273 / BP-1).